We begin with the raw amino-acid sequence, 272 residues long: Dermonecrotic toxin LspaSicTox-alphaII1 (272 aa).

The active site involves histidine 5. Residues glutamate 25 and aspartate 27 each coordinate Mg(2+). Histidine 41 (nucleophile) is an active-site residue. Cystine bridges form between cysteine 45–cysteine 51 and cysteine 47–cysteine 190. Residue aspartate 85 participates in Mg(2+) binding.

It belongs to the arthropod phospholipase D family. Class II subfamily. Requires Mg(2+) as cofactor. As to expression, expressed by the venom gland.

The protein resides in the secreted. It catalyses the reaction an N-(acyl)-sphingosylphosphocholine = an N-(acyl)-sphingosyl-1,3-cyclic phosphate + choline. It carries out the reaction an N-(acyl)-sphingosylphosphoethanolamine = an N-(acyl)-sphingosyl-1,3-cyclic phosphate + ethanolamine. The catalysed reaction is a 1-acyl-sn-glycero-3-phosphocholine = a 1-acyl-sn-glycero-2,3-cyclic phosphate + choline. The enzyme catalyses a 1-acyl-sn-glycero-3-phosphoethanolamine = a 1-acyl-sn-glycero-2,3-cyclic phosphate + ethanolamine. Dermonecrotic toxins cleave the phosphodiester linkage between the phosphate and headgroup of certain phospholipids (sphingolipid and lysolipid substrates), forming an alcohol (often choline) and a cyclic phosphate. This toxin acts on sphingomyelin (SM). It may also act on ceramide phosphoethanolamine (CPE), lysophosphatidylcholine (LPC) and lysophosphatidylethanolamine (LPE), but not on lysophosphatidylserine (LPS), and lysophosphatidylglycerol (LPG). It acts by transphosphatidylation, releasing exclusively cyclic phosphate products as second products. Induces dermonecrosis, hemolysis, increased vascular permeability, edema, inflammatory response, and platelet aggregation. The sequence is that of Dermonecrotic toxin LspaSicTox-alphaII1 from Loxosceles spadicea (Recluse spider).